A 151-amino-acid polypeptide reads, in one-letter code: 3-hydroxyacyl-[acyl-carrier-protein] dehydratase FabZ (151 aa).

His49 is an active-site residue.

This sequence belongs to the thioester dehydratase family. FabZ subfamily.

The protein localises to the cytoplasm. The enzyme catalyses a (3R)-hydroxyacyl-[ACP] = a (2E)-enoyl-[ACP] + H2O. Its function is as follows. Involved in unsaturated fatty acids biosynthesis. Catalyzes the dehydration of short chain beta-hydroxyacyl-ACPs and long chain saturated and unsaturated beta-hydroxyacyl-ACPs. This chain is 3-hydroxyacyl-[acyl-carrier-protein] dehydratase FabZ, found in Wolinella succinogenes (strain ATCC 29543 / DSM 1740 / CCUG 13145 / JCM 31913 / LMG 7466 / NCTC 11488 / FDC 602W) (Vibrio succinogenes).